A 288-amino-acid polypeptide reads, in one-letter code: 33 kDa chaperonin (288 aa).

2 disulfide bridges follow: cysteine 235-cysteine 237 and cysteine 268-cysteine 271.

This sequence belongs to the HSP33 family. Under oxidizing conditions two disulfide bonds are formed involving the reactive cysteines. Under reducing conditions zinc is bound to the reactive cysteines and the protein is inactive.

The protein resides in the cytoplasm. Its function is as follows. Redox regulated molecular chaperone. Protects both thermally unfolding and oxidatively damaged proteins from irreversible aggregation. Plays an important role in the bacterial defense system toward oxidative stress. The polypeptide is 33 kDa chaperonin (Streptococcus thermophilus (strain ATCC BAA-491 / LMD-9)).